Consider the following 290-residue polypeptide: 4-diphosphocytidyl-2-C-methyl-D-erythritol kinase (290 aa).

The active site involves Lys12. 97–107 (PVASGIGGGSA) serves as a coordination point for ATP. The active site involves Asp139.

It belongs to the GHMP kinase family. IspE subfamily.

The enzyme catalyses 4-CDP-2-C-methyl-D-erythritol + ATP = 4-CDP-2-C-methyl-D-erythritol 2-phosphate + ADP + H(+). It functions in the pathway isoprenoid biosynthesis; isopentenyl diphosphate biosynthesis via DXP pathway; isopentenyl diphosphate from 1-deoxy-D-xylulose 5-phosphate: step 3/6. Catalyzes the phosphorylation of the position 2 hydroxy group of 4-diphosphocytidyl-2C-methyl-D-erythritol. The sequence is that of 4-diphosphocytidyl-2-C-methyl-D-erythritol kinase from Parvibaculum lavamentivorans (strain DS-1 / DSM 13023 / NCIMB 13966).